A 633-amino-acid polypeptide reads, in one-letter code: Telomere-binding protein 1 (633 aa).

The tract at residues 253 to 272 (HAADRDDDENSSGCVHPSTS) is disordered. Over residues 263–272 (SSGCVHPSTS) the composition is skewed to polar residues. Positions 351 to 430 (VKLTIKSFNI…LNDIGFTLEC (80 aa)) constitute a Ubiquitin-like domain. The interval 506 to 615 (PFADPNSLAL…RVLAAQAYWS (110 aa)) is sufficient for telomeric DNA binding. Residues 529 to 588 (GQRRIRRPFTVAEVELLVEAVEHLGTGRWRDVKFRAFENVHHRTYVDLKDKWKTLVHTAS) enclose the HTH myb-type domain. In terms of domain architecture, SANT spans 534–584 (RRPFTVAEVELLVEAVEHLGTGRWRDVKFRAFENVHHRTYVDLKDKWKTLV). The H-T-H motif DNA-binding region spans 557 to 584 (WRDVKFRAFENVHHRTYVDLKDKWKTLV).

In terms of assembly, homodimer. Ubiquitous.

It is found in the chromosome. The protein resides in the telomere. In terms of biological role, binds the telomeric double-stranded 5'TTTAGGG-3' repeat and regulates telomere length and structure. In Oryza sativa subsp. japonica (Rice), this protein is Telomere-binding protein 1 (TBP1).